Reading from the N-terminus, the 1139-residue chain is Integrin alpha ina-1 (1139 aa).

An N-terminal signal peptide occupies residues 1-19 (MRECIISWTLLLCLSCVKS). Over 20–1084 (FNLDVNAPIY…PTIGDSRPIP (1065 aa)) the chain is Extracellular. The stretch at 21–85 (NLDVNAPIYR…CDINTFYNGG (65 aa)) is one FG-GAP 1 repeat. N-linked (GlcNAc...) asparagine glycans are attached at residues Asn108 and Asn136. FG-GAP repeat units lie at residues 111–171 (RGRT…LQST), 180–231 (LPTT…IFDS), 242–302 (NGDM…SSSK), 307–370 (EDKF…QRKQ), 378–438 (HPPK…IEKF), and 448–510 (GNDL…MEKR). Asn313 carries N-linked (GlcNAc...) asparagine glycosylation. N-linked (GlcNAc...) asparagine glycosylation is found at Asn580, Asn788, Asn851, and Asn1026. A helical transmembrane segment spans residues 1085 to 1106 (WWIYVIAAVIGVLILSLIIICL). Residues 1107–1139 (SKCGFFKRNRLDQPSLYTAQLKHEREEWADTGL) are Cytoplasmic-facing.

This sequence belongs to the integrin alpha chain family. Heterodimer of an alpha and a beta subunit. Alpha ina-1 associates with beta pat-3. Interacts (via cytoplasmic domain) with src-1 (when phosphorylated at 'Tyr-416').

The protein resides in the membrane. Its subcellular location is the cell projection. It is found in the phagocytic cup. The protein localises to the cytoplasmic vesicle. It localises to the phagosome membrane. Plays a role in cell migration, axon fasciculation, and morphogenesis. During gonad morphogenesis, involved in distal tip cell (DTC)-mediated guidance of gonad elongation, in maintaining their sharp tapering morphology and in their migration. Involved in the anterior-posterior positioning of QR neuroblast descendants by regulating the migratory speed of QR.p. Probably by acting as a receptor for apoptotic cells, plays a role in the clearance of apoptotic cells during mid-embryogenesis. The polypeptide is Integrin alpha ina-1 (ina-1) (Caenorhabditis elegans).